We begin with the raw amino-acid sequence, 222 residues long: Putative thymidylate synthase (222 aa).

Cysteine 139 is a catalytic residue.

The protein belongs to the thymidylate synthase family. Archaeal-type ThyA subfamily. Monomer.

It is found in the cytoplasm. It participates in pyrimidine metabolism; dTTP biosynthesis. May catalyze the biosynthesis of dTMP using an unknown cosubstrate. The chain is Putative thymidylate synthase from Methanocaldococcus jannaschii (strain ATCC 43067 / DSM 2661 / JAL-1 / JCM 10045 / NBRC 100440) (Methanococcus jannaschii).